The chain runs to 425 residues: NAC domain-containing protein 10 (425 aa).

The span at 1–10 (MESPDSSSGS) shows a compositional bias: polar residues. The segment at 1–34 (MESPDSSSGSAPPRVLRRQQQQPGSAPELPPGFR) is disordered. The span at 12-23 (PPRVLRRQQQQP) shows a compositional bias: low complexity. In terms of domain architecture, NAC spans 29–200 (LPPGFRFHPT…DWVLCRIYKK (172 aa)). Residues 129 to 206 (VGVKKALVFY…IYKKTNKAGA (78 aa)) mediate DNA binding.

In terms of tissue distribution, highest expression in stamens. Expressed in leaves.

It localises to the nucleus. Functionally, transcription factor of the NAC family associated with male fertility. Involved in anther development, but not in senescence. Reduced expression of NAC5 via RNAi leads to male-sterility. This Oryza sativa subsp. japonica (Rice) protein is NAC domain-containing protein 10.